The primary structure comprises 424 residues: STAM-binding protein (424 aa).

The tract at residues 1–127 is interaction with CHMP3; it reads MSDHADVSLP…YEQYKERKKK (127 aa). A phosphoserine mark is found at Ser2 and Ser48. The tract at residues 227-231 is interaction with STAM; that stretch reads PAKPP. Position 243 is a phosphoserine (Ser243). Residues 257-388 enclose the MPN domain; the sequence is IVVPRNLCSE…LTDYGLQEIS (132 aa). Zn(2+) is bound by residues His335, His337, Asp348, His350, Cys390, His396, and His398. The JAMM motif signature appears at 335 to 348; sequence HTHPTQTAFLSSVD.

The protein belongs to the peptidase M67C family. As to quaternary structure, interacts with STAM. Interacts with SMAD6 and SMAD7. Interacts with CHMP3; the interaction appears to relieve the autoinhibition of CHMP3. Interacts with SMURF2 and RNF11; this interaction promotes ubiquitination. Requires Zn(2+) as cofactor. Phosphorylated after BMP type I receptor activation. Post-translationally, ubiquitinated by SMURF2 in the presence of RNF11.

It is found in the nucleus. The protein localises to the membrane. It localises to the cytoplasm. Its subcellular location is the early endosome. With respect to regulation, inhibited by N-ethylmaleimide. Zinc metalloprotease that specifically cleaves 'Lys-63'-linked polyubiquitin chains. Does not cleave 'Lys-48'-linked polyubiquitin chains. Plays a role in signal transduction for cell growth and MYC induction mediated by IL-2 and GM-CSF. Potentiates BMP (bone morphogenetic protein) signaling by antagonizing the inhibitory action of SMAD6 and SMAD7. Has a key role in regulation of cell surface receptor-mediated endocytosis and ubiquitin-dependent sorting of receptors to lysosomes. Endosomal localization of STAMBP is required for efficient EGFR degradation but not for its internalization. Involved in the negative regulation of PI3K-AKT-mTOR and RAS-MAP signaling pathways. The sequence is that of STAM-binding protein (Stambp) from Rattus norvegicus (Rat).